A 293-amino-acid chain; its full sequence is Formamidopyrimidine-DNA glycosylase (293 aa).

Residue proline 2 is the Schiff-base intermediate with DNA of the active site. The Proton donor role is filled by glutamate 3. The Proton donor; for beta-elimination activity role is filled by lysine 60. DNA contacts are provided by histidine 110, arginine 129, and arginine 174. Residues 259–293 form an FPG-type zinc finger; it reads NVYRRTGKECRKCGNLIEKQKIAGRSTHWCPNCQK. Arginine 283 (proton donor; for delta-elimination activity) is an active-site residue.

The protein belongs to the FPG family. In terms of assembly, monomer. Zn(2+) is required as a cofactor.

The catalysed reaction is Hydrolysis of DNA containing ring-opened 7-methylguanine residues, releasing 2,6-diamino-4-hydroxy-5-(N-methyl)formamidopyrimidine.. It carries out the reaction 2'-deoxyribonucleotide-(2'-deoxyribose 5'-phosphate)-2'-deoxyribonucleotide-DNA = a 3'-end 2'-deoxyribonucleotide-(2,3-dehydro-2,3-deoxyribose 5'-phosphate)-DNA + a 5'-end 5'-phospho-2'-deoxyribonucleoside-DNA + H(+). Functionally, involved in base excision repair of DNA damaged by oxidation or by mutagenic agents. Acts as a DNA glycosylase that recognizes and removes damaged bases. Has a preference for oxidized purines, such as 7,8-dihydro-8-oxoguanine (8-oxoG). Has AP (apurinic/apyrimidinic) lyase activity and introduces nicks in the DNA strand. Cleaves the DNA backbone by beta-delta elimination to generate a single-strand break at the site of the removed base with both 3'- and 5'-phosphates. This chain is Formamidopyrimidine-DNA glycosylase, found in Prochlorococcus marinus (strain MIT 9312).